A 68-amino-acid polypeptide reads, in one-letter code: Large ribosomal subunit protein uL29 (68 aa).

It belongs to the universal ribosomal protein uL29 family.

This Methanobrevibacter smithii (strain ATCC 35061 / DSM 861 / OCM 144 / PS) protein is Large ribosomal subunit protein uL29.